The primary structure comprises 510 residues: Inositol-3-phosphate synthase (510 aa).

The NAD(+) site is built by glycine 70, glycine 71, asparagine 72, asparagine 73, aspartate 143, isoleucine 180, glutamine 190, arginine 193, threonine 230, alanine 231, asparagine 232, threonine 233, glycine 281, serine 282, aspartate 306, serine 309, asparagine 340, asparagine 341, aspartate 342, lysine 355, glycine 393, aspartate 394, aspartate 422, and serine 423.

This sequence belongs to the myo-inositol 1-phosphate synthase family. The cofactor is NAD(+).

It localises to the cytoplasm. The protein localises to the cytosol. It is found in the nucleus. It catalyses the reaction D-glucose 6-phosphate = 1D-myo-inositol 3-phosphate. Its pathway is polyol metabolism; myo-inositol biosynthesis; myo-inositol from D-glucose 6-phosphate: step 1/2. Its function is as follows. Key enzyme in myo-inositol biosynthesis pathway that catalyzes the conversion of glucose 6-phosphate to 1-myo-inositol 1-phosphate in a NAD-dependent manner. This is Inositol-3-phosphate synthase from Zea mays (Maize).